The primary structure comprises 441 residues: Gluconate 2-dehydrogenase cytochrome c subunit (441 aa).

Residues 1-19 (MMKSILALVLGTLSFAALA) form the signal peptide. Cytochrome c domains lie at 26 to 129 (ALVK…MHGV), 173 to 289 (PVLA…KSLG), and 312 to 403 (DDSQ…RGSW). Heme c contacts are provided by Cys40, Cys43, His44, Cys188, Cys191, His192, Cys325, Cys328, and His329.

As to quaternary structure, heterotrimer. FAD serves as cofactor. Binds 3 heme c groupd covalently per subunit.

It is found in the cell membrane. The catalysed reaction is D-gluconate + A = 2-dehydro-D-gluconate + AH2. Functionally, part of the heterotrimer that catalyzes the conversion of D-gluconate to 2-dehydro-D-gluconate. In Pantoea cypripedii (Pectobacterium cypripedii), this protein is Gluconate 2-dehydrogenase cytochrome c subunit.